The chain runs to 86 residues: MSIFPIALALLLIGLEEGEAARDGYPISKNNYCKIYCPNTKVCKETCKNRASAPDGECDGWNLCYCFKVPDNIPVWGDPGTPPCMT.

Positions 1–20 (MSIFPIALALLLIGLEEGEA) are cleaved as a signal peptide. The LCN-type CS-alpha/beta domain maps to 22–85 (RDGYPISKNN…WGDPGTPPCM (64 aa)). Disulfide bonds link Cys33–Cys84, Cys37–Cys58, Cys43–Cys64, and Cys47–Cys66.

The protein belongs to the long (4 C-C) scorpion toxin superfamily. Sodium channel inhibitor family. Beta subfamily. In terms of tissue distribution, expressed by the venom gland.

It is found in the secreted. In terms of biological role, beta toxins bind voltage-independently at site-4 of sodium channels (Nav) and shift the voltage of activation toward more negative potentials thereby affecting sodium channel activation and promoting spontaneous and repetitive firing. The chain is Toxin Tpa5 from Tityus pachyurus (Colombian scorpion).